The following is a 635-amino-acid chain: MQLLLIHSDYIEYETKKQTPVAEKIEESLKSCRLEEALTAFMAVESVDEANPEETIEKTVFEIEKVATQVKTDRIMLYPYAHLSSDLSSPKVAVKVFKGIETALSGKYEVKRAPFGWYKAFSISCKGHPLSELSRSIRPEGTQRAAGKVEAGKEKEEVVSEALKAEDTAKSYWRILTPDGELREIENFDLTPYPKLQQFVDYEISKSRAVERAPPHVELMRRLELADYEPGSDSGNMRYYPKGRLIKALLENYVLDVATDFGAMEVETPIMYDMNHPTLKKYLDRFPARQYSIESDKRQMFLRFAACFGQFLMNHDMTISYRNLPLRMIEMTRYSFRKEQRGELVGLRRLRAFTMPDMHSLCEDMDQAVDQFKKQYDLCIDVLENIGIHIKDYEVAIRFTKDFYESNKELIVNMARTVNKPVLVEMWDTRFFYFVLKFEFNFVDALAKASALSTVQIDVENAERYDISYVNADGKLERPTVLHCSPSGAIERCIYALLEKAAMETEEGKVPMLPVWLSPTQVRIVPISEKHVAFAEEVSQKLDCRVDIDDRDLSIGKKVREAGREWVPYVVVIGDKEIEDGTINVTIRAESEQKKPKKVQITPEELNDRIKGEIAGKPYRKLPLSKHLSGRPKFV.

The editing domain stretch occupies residues 1 to 144 (MQLLLIHSDY…RSIRPEGTQR (144 aa)). Residues 215-514 (PHVELMRRLE…TEEGKVPMLP (300 aa)) are catalytic. Zn(2+)-binding residues include cysteine 307, histidine 359, and histidine 483.

This sequence belongs to the class-II aminoacyl-tRNA synthetase family. As to quaternary structure, homodimer. The cofactor is Zn(2+).

It is found in the cytoplasm. It carries out the reaction tRNA(Thr) + L-threonine + ATP = L-threonyl-tRNA(Thr) + AMP + diphosphate + H(+). Its function is as follows. Catalyzes the attachment of threonine to tRNA(Thr) in a two-step reaction: L-threonine is first activated by ATP to form Thr-AMP and then transferred to the acceptor end of tRNA(Thr). Also edits incorrectly charged L-seryl-tRNA(Thr). This is Threonine--tRNA ligase from Methanosarcina barkeri (strain Fusaro / DSM 804).